The following is a 225-amino-acid chain: Holliday junction branch migration complex subunit RuvA (225 aa).

A domain I region spans residues 1 to 71 (MISWINGDLV…EDSDLLFGFT (71 aa)). A domain II region spans residues 72–150 (SKDQKNFFIE…SEILSEEEKS (79 aa)). The tract at residues 151–161 (KDEFEIKDPEI) is flexible linker. Positions 161–225 (IIKMIEDLQL…LDEDSSNKDR (65 aa)) are domain III.

This sequence belongs to the RuvA family. In terms of assembly, homotetramer. Forms an RuvA(8)-RuvB(12)-Holliday junction (HJ) complex. HJ DNA is sandwiched between 2 RuvA tetramers; dsDNA enters through RuvA and exits via RuvB. An RuvB hexamer assembles on each DNA strand where it exits the tetramer. Each RuvB hexamer is contacted by two RuvA subunits (via domain III) on 2 adjacent RuvB subunits; this complex drives branch migration. In the full resolvosome a probable DNA-RuvA(4)-RuvB(12)-RuvC(2) complex forms which resolves the HJ.

It is found in the cytoplasm. The RuvA-RuvB-RuvC complex processes Holliday junction (HJ) DNA during genetic recombination and DNA repair, while the RuvA-RuvB complex plays an important role in the rescue of blocked DNA replication forks via replication fork reversal (RFR). RuvA specifically binds to HJ cruciform DNA, conferring on it an open structure. The RuvB hexamer acts as an ATP-dependent pump, pulling dsDNA into and through the RuvAB complex. HJ branch migration allows RuvC to scan DNA until it finds its consensus sequence, where it cleaves and resolves the cruciform DNA. The polypeptide is Holliday junction branch migration complex subunit RuvA (Prochlorococcus marinus (strain AS9601)).